The following is a 166-amino-acid chain: Small ribosomal subunit protein uS5 (166 aa).

The S5 DRBM domain occupies 12–75; it reads YIEKLVQVNR…EAARRNMIQV (64 aa).

This sequence belongs to the universal ribosomal protein uS5 family. In terms of assembly, part of the 30S ribosomal subunit. Contacts proteins S4 and S8.

Functionally, with S4 and S12 plays an important role in translational accuracy. Its function is as follows. Located at the back of the 30S subunit body where it stabilizes the conformation of the head with respect to the body. This is Small ribosomal subunit protein uS5 from Ectopseudomonas mendocina (strain ymp) (Pseudomonas mendocina).